We begin with the raw amino-acid sequence, 254 residues long: UPF0246 protein CPR_2119 (254 aa).

It belongs to the UPF0246 family.

The sequence is that of UPF0246 protein CPR_2119 from Clostridium perfringens (strain SM101 / Type A).